Consider the following 698-residue polypeptide: Ion-translocating oxidoreductase complex subunit C (698 aa).

2 consecutive 4Fe-4S ferredoxin-type domains span residues 366-397 (TEMG…QQLY) and 407-436 (KARN…VQYY). [4Fe-4S] cluster is bound by residues cysteine 377, cysteine 380, cysteine 383, cysteine 387, cysteine 416, cysteine 419, cysteine 422, and cysteine 426.

It belongs to the 4Fe4S bacterial-type ferredoxin family. RnfC subfamily. As to quaternary structure, the complex is composed of six subunits: RnfA, RnfB, RnfC, RnfD, RnfE and RnfG. [4Fe-4S] cluster serves as cofactor.

Its subcellular location is the cell inner membrane. Part of a membrane-bound complex that couples electron transfer with translocation of ions across the membrane. The chain is Ion-translocating oxidoreductase complex subunit C from Yersinia pseudotuberculosis serotype O:1b (strain IP 31758).